The following is a 612-amino-acid chain: MENQLTKSVEERTFQYQDSLPSLPVPALEESLKKYLESVKPFANEDEYKKTEEIVQKFQEGAGKRLHQKLLERARGKRNWLEEWWLNVAYLDVRIPSQLNVNFVGPCPHFEHYWPAREGTQLERGSMMLWHNLNYWQLLRREKLPVHKSGNTPLDMNQFRMLFSTCKVPGITRDSIMNYFKTESEGHCPTHIAVLCRGRAFVFDVLHEGCLITPPELLRQLTYIHKKCSNEPVGPSIAALTSEERTRWAKAREYLISLDPENLTLLEKIQTSLFVYSIEDSSPHATPEEYSQVFEMLLGGDPSVRWGDKSYNLISFANGIFGCCCDHAPYDAMVMVNIAHYVDERVLETEGRWKGSEKVRDIPLPEELVFTVDEKILNDVSQAKAQHLKAASDLQIAASTFTSFGKKLTKEEALHPDTFIQLALQLAYYRLHGRPGCCYETAMTRYFYHGRTETVRSCTVEAVRWCQSMQDPSASLLERQQKMLEAFAKHNKMMKDCSHGKGFDRHLLGLLLIAKEEGLPVPELFEDPLFSRSGGGGNFVLSTSLVGYLRVQGVVVPMVHNGYGFFYHIRDDRFVVACSSWRSCPETDAEKLVQMIFHAFHDMIQLMNTAHL.

An N-acetylmethionine modification is found at methionine 1. 2 positions are modified to N6-succinyllysine: lysine 40 and lysine 57. The active-site Proton acceptor is the histidine 327. CoA contacts are provided by residues lysine 406 and 410–417; that span reads KEEALHPD. N6-acetyllysine; alternate is present on lysine 406. Residue lysine 406 is modified to N6-succinyllysine; alternate. (R)-carnitine-binding residues include tyrosine 439, threonine 441, and threonine 452. A Microbody targeting signal motif is present at residues 610–612; the sequence is AHL.

The protein belongs to the carnitine/choline acetyltransferase family.

Its subcellular location is the peroxisome. The catalysed reaction is octanoyl-CoA + (R)-carnitine = O-octanoyl-(R)-carnitine + CoA. It carries out the reaction 4,8-dimethylnonanoyl-CoA + (R)-carnitine = O-4,8-dimethylnonanoyl-(R)-carnitine + CoA. It functions in the pathway lipid metabolism; fatty acid beta-oxidation. Its function is as follows. Beta-oxidation of fatty acids. The highest activity concerns the C6 to C10 chain length substrate. This Mus musculus (Mouse) protein is Peroxisomal carnitine O-octanoyltransferase (Crot).